The chain runs to 81 residues: Antitoxin MT2731 (81 aa).

Antitoxin component of a type II toxin-antitoxin (TA) system. Neutralizes the effect of cognate toxin MT2730. The polypeptide is Antitoxin MT2731 (Mycobacterium tuberculosis (strain CDC 1551 / Oshkosh)).